We begin with the raw amino-acid sequence, 138 residues long: Putative ribonuclease VapC45 (138 aa).

Toxic component of a type II toxin-antitoxin (TA) system. An RNase. The cognate antitoxin is VapB45. This is Putative ribonuclease VapC45 from Mycobacterium tuberculosis (strain ATCC 25618 / H37Rv).